We begin with the raw amino-acid sequence, 224 residues long: MFITFEGIEGSGKSTALQGLAAWLQQHGHGVAVTREPGGSRLGRTLRSILLDLGNTDITPEAELFLYLADRAQHVAQVVRPALDEGMVVLSDRYADSTVVYQGYGRGLDPMMLRQFNDVAVGGLWPDLTILLDLEPEAGLNRALARNIREGMHAAEGRFEAESLAFHTRVREGYLTWAALHGGRYRVVDATQSPEDVVRDVVGIVAAALGDVSSGEAVSGRTGA.

Residue 7–14 (GIEGSGKS) coordinates ATP.

Belongs to the thymidylate kinase family.

It catalyses the reaction dTMP + ATP = dTDP + ADP. Its function is as follows. Phosphorylation of dTMP to form dTDP in both de novo and salvage pathways of dTTP synthesis. This chain is Thymidylate kinase, found in Nitratidesulfovibrio vulgaris (strain DP4) (Desulfovibrio vulgaris).